The primary structure comprises 330 residues: Lipoyl synthase (330 aa).

The interval 1-31 (MSDAPIATSSEVTQSPADYDPTKKQKSAEKT) is disordered. The segment covering 7–16 (ATSSEVTQSP) has biased composition (polar residues). Positions 20-31 (DPTKKQKSAEKT) are enriched in basic and acidic residues. Residues Cys77, Cys82, Cys88, Cys103, Cys107, Cys110, and Ser317 each contribute to the [4Fe-4S] cluster site. One can recognise a Radical SAM core domain in the interval 88 to 306 (CFGKGTATFM…EEEAYKMGFT (219 aa)).

The protein belongs to the radical SAM superfamily. Lipoyl synthase family. [4Fe-4S] cluster is required as a cofactor.

It is found in the cytoplasm. It catalyses the reaction [[Fe-S] cluster scaffold protein carrying a second [4Fe-4S](2+) cluster] + N(6)-octanoyl-L-lysyl-[protein] + 2 oxidized [2Fe-2S]-[ferredoxin] + 2 S-adenosyl-L-methionine + 4 H(+) = [[Fe-S] cluster scaffold protein] + N(6)-[(R)-dihydrolipoyl]-L-lysyl-[protein] + 4 Fe(3+) + 2 hydrogen sulfide + 2 5'-deoxyadenosine + 2 L-methionine + 2 reduced [2Fe-2S]-[ferredoxin]. It participates in protein modification; protein lipoylation via endogenous pathway; protein N(6)-(lipoyl)lysine from octanoyl-[acyl-carrier-protein]: step 2/2. Its function is as follows. Catalyzes the radical-mediated insertion of two sulfur atoms into the C-6 and C-8 positions of the octanoyl moiety bound to the lipoyl domains of lipoate-dependent enzymes, thereby converting the octanoylated domains into lipoylated derivatives. The chain is Lipoyl synthase from Cupriavidus metallidurans (strain ATCC 43123 / DSM 2839 / NBRC 102507 / CH34) (Ralstonia metallidurans).